An 85-amino-acid polypeptide reads, in one-letter code: MVERALRKTRVGKVVSNKMDKTIVVAIETSVKHPLYGKIVKRTYKLKAHDEENQCQIGDKVKVMETRPLSKEKRWRLVQIVEKAQ.

It belongs to the universal ribosomal protein uS17 family. In terms of assembly, part of the 30S ribosomal subunit.

Its function is as follows. One of the primary rRNA binding proteins, it binds specifically to the 5'-end of 16S ribosomal RNA. The chain is Small ribosomal subunit protein uS17 from Ruminiclostridium cellulolyticum (strain ATCC 35319 / DSM 5812 / JCM 6584 / H10) (Clostridium cellulolyticum).